Consider the following 395-residue polypeptide: Crh-like protein 5 (395 aa).

The signal sequence occupies residues 1–19; the sequence is MYFKYTAAALAAVLPLCSA. A disulfide bridge connects residues Cys25 and Cys32. Residues 45–230 form the GH16 domain; the sequence is ADFTSASALD…WAGGLTDYSA (186 aa). Catalysis depends on Glu119, which acts as the Nucleophile. Glu123 functions as the Proton donor in the catalytic mechanism. 4 residues coordinate chitin: Glu123, Arg203, Trp207, and Thr218. Residues 271-374 are disordered; sequence ISSSSSVTSS…PELSQGAAGS (104 aa). Low complexity-rich tracts occupy residues 272 to 338 and 348 to 364; these read SSSS…SNTG and GSSS…ASAT. Asn319 carries an N-linked (GlcNAc...) asparagine glycan. Residue Gly370 is the site of GPI-like-anchor amidated glycine attachment. The propeptide at 371 to 395 is removed in mature form; that stretch reads AAGSIKGSVTACALVFGAVAAVLAF.

This sequence belongs to the glycosyl hydrolase 16 family. CRH1 subfamily. In terms of processing, the GPI-like anchor contains a phosphoceramide lipid group. The anchor position has not been determined.

It localises to the cell membrane. Its subcellular location is the secreted. The protein resides in the cell wall. The enzyme catalyses Random endo-hydrolysis of N-acetyl-beta-D-glucosaminide (1-&gt;4)-beta-linkages in chitin and chitodextrins.. In terms of biological role, dual chitinase/transglycosylase that plays a role in cell wall architecture. Chitinase and transglycosylase activities are coupled. Required for the polysaccharide cross-linking at the septa and the cell wall. More specifically, transfers chitin to 1,6-beta-glucan in the cell wall. Chr5 shows acceptor substrate promiscuity and is also able to cross-link chitin to chitin. The protein is Crh-like protein 5 of Aspergillus fumigatus (strain ATCC MYA-4609 / CBS 101355 / FGSC A1100 / Af293) (Neosartorya fumigata).